The following is a 36-amino-acid chain: Photosystem I reaction center subunit VIII (36 aa).

A helical membrane pass occupies residues 7–29 (PSILVPLVGIIFPGISMALLFIY).

This sequence belongs to the PsaI family.

The protein resides in the plastid. The protein localises to the chloroplast thylakoid membrane. In terms of biological role, may help in the organization of the PsaL subunit. This Gracilaria tenuistipitata var. liui (Red alga) protein is Photosystem I reaction center subunit VIII.